Here is a 311-residue protein sequence, read N- to C-terminus: Malate dehydrogenase (311 aa).

NAD(+) is bound by residues 7–13 (GAAGGIG) and D34. Residues R81 and R87 each coordinate substrate. NAD(+) is bound by residues N94 and 117 to 119 (ITN). Residues N119 and R153 each contribute to the substrate site. H177 functions as the Proton acceptor in the catalytic mechanism. M227 contributes to the NAD(+) binding site.

This sequence belongs to the LDH/MDH superfamily. MDH type 1 family. In terms of assembly, homodimer.

The catalysed reaction is (S)-malate + NAD(+) = oxaloacetate + NADH + H(+). Functionally, catalyzes the reversible oxidation of malate to oxaloacetate. The polypeptide is Malate dehydrogenase (Haemophilus influenzae (strain 86-028NP)).